The following is a 172-amino-acid chain: Large ribosomal subunit protein uL10 (172 aa).

The protein belongs to the universal ribosomal protein uL10 family. In terms of assembly, part of the ribosomal stalk of the 50S ribosomal subunit. The N-terminus interacts with L11 and the large rRNA to form the base of the stalk. The C-terminus forms an elongated spine to which L12 dimers bind in a sequential fashion forming a multimeric L10(L12)X complex.

Its function is as follows. Forms part of the ribosomal stalk, playing a central role in the interaction of the ribosome with GTP-bound translation factors. The polypeptide is Large ribosomal subunit protein uL10 (Brucella suis (strain ATCC 23445 / NCTC 10510)).